Consider the following 577-residue polypeptide: Arginine--tRNA ligase (577 aa).

The 'HIGH' region motif lies at 122 to 132 (PNVAKEMHVGH).

The protein belongs to the class-I aminoacyl-tRNA synthetase family. Monomer.

It localises to the cytoplasm. The catalysed reaction is tRNA(Arg) + L-arginine + ATP = L-arginyl-tRNA(Arg) + AMP + diphosphate. In Salmonella typhimurium (strain SL1344), this protein is Arginine--tRNA ligase (argS).